We begin with the raw amino-acid sequence, 157 residues long: Phosphopantetheine adenylyltransferase (157 aa).

Serine 9 contributes to the substrate binding site. Residues 9-10 and histidine 17 contribute to the ATP site; that span reads SF. 3 residues coordinate substrate: lysine 41, leucine 73, and lysine 87. ATP contacts are provided by residues 88 to 90, glutamate 98, and 123 to 129; these read GLR and YSYLSSS.

This sequence belongs to the bacterial CoaD family. Homohexamer. It depends on Mg(2+) as a cofactor.

It localises to the cytoplasm. The enzyme catalyses (R)-4'-phosphopantetheine + ATP + H(+) = 3'-dephospho-CoA + diphosphate. Its pathway is cofactor biosynthesis; coenzyme A biosynthesis; CoA from (R)-pantothenate: step 4/5. Functionally, reversibly transfers an adenylyl group from ATP to 4'-phosphopantetheine, yielding dephospho-CoA (dPCoA) and pyrophosphate. The chain is Phosphopantetheine adenylyltransferase from Alkaliphilus metalliredigens (strain QYMF).